The chain runs to 101 residues: Large ribosomal subunit protein uL24 (101 aa).

Belongs to the universal ribosomal protein uL24 family. Part of the 50S ribosomal subunit.

One of two assembly initiator proteins, it binds directly to the 5'-end of the 23S rRNA, where it nucleates assembly of the 50S subunit. In terms of biological role, one of the proteins that surrounds the polypeptide exit tunnel on the outside of the subunit. In Borrelia turicatae (strain 91E135), this protein is Large ribosomal subunit protein uL24.